The chain runs to 165 residues: uncharacterized protein (165 aa).

A helical transmembrane segment spans residues 4–26; sequence FVIGTMIALAGLLVGGGVGSYFT.

It is found in the membrane. This is an uncharacterized protein from Aquifex aeolicus (strain VF5).